Consider the following 373-residue polypeptide: Glutamate 5-kinase (373 aa).

ATP is bound at residue lysine 16. The substrate site is built by serine 56, aspartate 143, and asparagine 155. ATP is bound at residue 175–176 (TD). Positions 281 to 359 (RGRLTLDDGA…SRIDSLLGYK (79 aa)) constitute a PUA domain.

It belongs to the glutamate 5-kinase family.

Its subcellular location is the cytoplasm. It carries out the reaction L-glutamate + ATP = L-glutamyl 5-phosphate + ADP. The protein operates within amino-acid biosynthesis; L-proline biosynthesis; L-glutamate 5-semialdehyde from L-glutamate: step 1/2. Its function is as follows. Catalyzes the transfer of a phosphate group to glutamate to form L-glutamate 5-phosphate. The sequence is that of Glutamate 5-kinase from Saccharophagus degradans (strain 2-40 / ATCC 43961 / DSM 17024).